The sequence spans 181 residues: UPF0398 protein LMHCC_0668 (181 aa).

The protein belongs to the UPF0398 family.

The sequence is that of UPF0398 protein LMHCC_0668 from Listeria monocytogenes serotype 4a (strain HCC23).